The chain runs to 357 residues: Heat-inducible transcription repressor HrcA (357 aa).

This sequence belongs to the HrcA family.

Negative regulator of class I heat shock genes (grpE-dnaK-dnaJ and groELS operons). Prevents heat-shock induction of these operons. The sequence is that of Heat-inducible transcription repressor HrcA from Anabaena sp. (strain L31).